The chain runs to 211 residues: Scoloptoxin SSD43 (211 aa).

Positions 1 to 20 (MNFVIYGVIVVLTSQLYVDG) are cleaved as a signal peptide.

Post-translationally, contains 3 disulfide bonds. Expressed by the venom gland.

It is found in the secreted. Its function is as follows. Shows trypsin inhibiting activity. The protein is highly thermally stable, since its incubation in boiling water during 10 minutes does not reduce its activity. The sequence is that of Scoloptoxin SSD43 from Scolopendra dehaani (Thai centipede).